The following is a 159-amino-acid chain: Ribosomal RNA large subunit methyltransferase H (159 aa).

Residues leucine 76, glycine 108, and 127–132 (FGLLTL) each bind S-adenosyl-L-methionine.

Belongs to the RNA methyltransferase RlmH family. In terms of assembly, homodimer.

The protein resides in the cytoplasm. It catalyses the reaction pseudouridine(1915) in 23S rRNA + S-adenosyl-L-methionine = N(3)-methylpseudouridine(1915) in 23S rRNA + S-adenosyl-L-homocysteine + H(+). Specifically methylates the pseudouridine at position 1915 (m3Psi1915) in 23S rRNA. The sequence is that of Ribosomal RNA large subunit methyltransferase H from Streptococcus pyogenes serotype M6 (strain ATCC BAA-946 / MGAS10394).